The chain runs to 620 residues: Glutathione-regulated potassium-efflux system protein KefC (620 aa).

12 helical membrane-spanning segments follow: residues 4–24 (HTLL…PIAV), 26–46 (LGLG…PWGL), 54–74 (SILH…GLEL), 90–110 (GALQ…FLGL), 114–134 (VAEL…MQAM), 149–169 (FAVL…IPLL), 178–198 (LGAF…VVLL), 218–238 (VFSA…EEVG), 270–290 (GLLL…GTLV), 294–314 (LRIL…LWLV), 327–347 (WFAV…GAAQ), and 359–379 (ALTL…VLLT). One can recognise an RCK N-terminal domain in the interval 399-518 (QPRVIVAGFG…AGVAMPERET (120 aa)). The tract at residues 599-620 (QGTAEGKHSGEAADEPEVKPSI) is disordered.

Belongs to the monovalent cation:proton antiporter 2 (CPA2) transporter (TC 2.A.37) family. KefC subfamily. In terms of assembly, homodimer. Interacts with the regulatory subunit KefF.

The protein resides in the cell inner membrane. Pore-forming subunit of a potassium efflux system that confers protection against electrophiles. Catalyzes K(+)/H(+) antiport. The chain is Glutathione-regulated potassium-efflux system protein KefC from Salmonella choleraesuis (strain SC-B67).